The chain runs to 335 residues: Glyceraldehyde-3-phosphate dehydrogenase (335 aa).

Residues 11–12 and Gly110 each bind NAD(+); that span reads TI. 139-141 contributes to the D-glyceraldehyde 3-phosphate binding site; sequence SCN. Residue Cys140 is the Nucleophile of the active site. Arg168 lines the NAD(+) pocket. 194-195 is a D-glyceraldehyde 3-phosphate binding site; sequence HG. An NAD(+)-binding site is contributed by Gln301.

This sequence belongs to the glyceraldehyde-3-phosphate dehydrogenase family. Homotetramer.

The protein localises to the cytoplasm. The catalysed reaction is D-glyceraldehyde 3-phosphate + phosphate + NADP(+) = (2R)-3-phospho-glyceroyl phosphate + NADPH + H(+). It catalyses the reaction D-glyceraldehyde 3-phosphate + phosphate + NAD(+) = (2R)-3-phospho-glyceroyl phosphate + NADH + H(+). It functions in the pathway carbohydrate degradation; glycolysis; pyruvate from D-glyceraldehyde 3-phosphate: step 1/5. The polypeptide is Glyceraldehyde-3-phosphate dehydrogenase (Halobacterium salinarum (strain ATCC 29341 / DSM 671 / R1)).